The primary structure comprises 540 residues: 2-isopropylmalate synthase (540 aa).

The region spanning 8 to 273 (VLIFDTTLRD…FFGRDQDSPT (266 aa)) is the Pyruvate carboxyltransferase domain. Positions 17, 208, 210, and 244 each coordinate Mn(2+). The tract at residues 408-540 (QLQLVQVSCG…AVVLDARPTL (133 aa)) is regulatory domain.

The protein belongs to the alpha-IPM synthase/homocitrate synthase family. LeuA type 1 subfamily. Homodimer. Requires Mn(2+) as cofactor.

The protein localises to the cytoplasm. It carries out the reaction 3-methyl-2-oxobutanoate + acetyl-CoA + H2O = (2S)-2-isopropylmalate + CoA + H(+). The protein operates within amino-acid biosynthesis; L-leucine biosynthesis; L-leucine from 3-methyl-2-oxobutanoate: step 1/4. Its function is as follows. Catalyzes the condensation of the acetyl group of acetyl-CoA with 3-methyl-2-oxobutanoate (2-ketoisovalerate) to form 3-carboxy-3-hydroxy-4-methylpentanoate (2-isopropylmalate). The sequence is that of 2-isopropylmalate synthase from Parasynechococcus marenigrum (strain WH8102).